The following is a 254-amino-acid chain: HTH-type transcriptional regulator GlvR (254 aa).

An HTH rpiR-type domain is found at 1–77; the sequence is MQLEELINQH…VFLKWEDQPE (77 aa). The H-T-H motif DNA-binding region spans 37 to 56; the sequence is IDALAKACSVSRSSILRLAQ. The SIS domain maps to 106–248; the sequence is MCQLIDAADR…FRAYVDYKEA (143 aa).

Positive regulator of the glv operon expression, which consists of GlvA, GlvR and GlvC. The protein is HTH-type transcriptional regulator GlvR (glvR) of Bacillus subtilis (strain 168).